A 111-amino-acid polypeptide reads, in one-letter code: Cytochrome c oxidase subunit 6A1, mitochondrial (111 aa).

The transit peptide at 1–26 (MASAVLSASRVSGLLGRALPRVGRPM) directs the protein to the mitochondrion. The Mitochondrial matrix portion of the chain corresponds to 27 to 36 (SSGAHGEEGS). The chain crosses the membrane as a helical span at residues 37 to 61 (ARIWKALTYFVALPGVGVSMLNVFL). At 62-111 (KSRHEEHERPEFVAYPHLRIRTKPFPWGDGNHTLFHNPHMNPLPTGYEDE) the chain is on the mitochondrial intermembrane side.

Belongs to the cytochrome c oxidase subunit 6A family. As to quaternary structure, component of the cytochrome c oxidase (complex IV, CIV), a multisubunit enzyme composed of 14 subunits. The complex is composed of a catalytic core of 3 subunits MT-CO1, MT-CO2 and MT-CO3, encoded in the mitochondrial DNA, and 11 supernumerary subunits COX4I, COX5A, COX5B, COX6A, COX6B, COX6C, COX7A, COX7B, COX7C, COX8 and NDUFA4, which are encoded in the nuclear genome. The complex exists as a monomer or a dimer and forms supercomplexes (SCs) in the inner mitochondrial membrane with NADH-ubiquinone oxidoreductase (complex I, CI) and ubiquinol-cytochrome c oxidoreductase (cytochrome b-c1 complex, complex III, CIII), resulting in different assemblies (supercomplex SCI(1)III(2)IV(1) and megacomplex MCI(2)III(2)IV(2)).

The protein resides in the mitochondrion inner membrane. It functions in the pathway energy metabolism; oxidative phosphorylation. Component of the cytochrome c oxidase, the last enzyme in the mitochondrial electron transport chain which drives oxidative phosphorylation. The respiratory chain contains 3 multisubunit complexes succinate dehydrogenase (complex II, CII), ubiquinol-cytochrome c oxidoreductase (cytochrome b-c1 complex, complex III, CIII) and cytochrome c oxidase (complex IV, CIV), that cooperate to transfer electrons derived from NADH and succinate to molecular oxygen, creating an electrochemical gradient over the inner membrane that drives transmembrane transport and the ATP synthase. Cytochrome c oxidase is the component of the respiratory chain that catalyzes the reduction of oxygen to water. Electrons originating from reduced cytochrome c in the intermembrane space (IMS) are transferred via the dinuclear copper A center (CU(A)) of subunit 2 and heme A of subunit 1 to the active site in subunit 1, a binuclear center (BNC) formed by heme A3 and copper B (CU(B)). The BNC reduces molecular oxygen to 2 water molecules unsing 4 electrons from cytochrome c in the IMS and 4 protons from the mitochondrial matrix. The polypeptide is Cytochrome c oxidase subunit 6A1, mitochondrial (Cox6a1) (Rattus norvegicus (Rat)).